A 341-amino-acid polypeptide reads, in one-letter code: MNHKKDLYVLGIETSCDETAAAIVKNGTDIISNVVASQIESHKRFGGVVPEIASRHHVEQITIVLEEAFAQADMTFDDIDAIAVTEGPGLVGALLIGVNAAKALSFARGIPLVGVHHIAGHIYANRLVQDIQFPAIALVVSGGHTELVYMKEHGSFEVIGETLDDAAGEAYDKVARTMGLPYPGGPHIDKLAQKGEANVPLPRAWLEEGSYHFSFSGLKSAVINTLHNASQKGETIAPEDLSASFQESVIDVLVTKTERAAEAYGVKQVLLAGGVAANKGLRAALEKTFSSRPEIELLIPPLSLCTDNAAMIAAAGTVAFEKGIRGKYDMNGQPGLDLTSY.

Fe cation is bound by residues His117 and His121. Substrate is bound by residues 139–143 (VVSGG), Asp172, Gly185, Asp189, and Asn278. Asp307 serves as a coordination point for Fe cation.

The protein belongs to the KAE1 / TsaD family. Fe(2+) serves as cofactor.

Its subcellular location is the cytoplasm. It catalyses the reaction L-threonylcarbamoyladenylate + adenosine(37) in tRNA = N(6)-L-threonylcarbamoyladenosine(37) in tRNA + AMP + H(+). Functionally, required for the formation of a threonylcarbamoyl group on adenosine at position 37 (t(6)A37) in tRNAs that read codons beginning with adenine. Is involved in the transfer of the threonylcarbamoyl moiety of threonylcarbamoyl-AMP (TC-AMP) to the N6 group of A37, together with TsaE and TsaB. TsaD likely plays a direct catalytic role in this reaction. This Bacillus licheniformis (strain ATCC 14580 / DSM 13 / JCM 2505 / CCUG 7422 / NBRC 12200 / NCIMB 9375 / NCTC 10341 / NRRL NRS-1264 / Gibson 46) protein is tRNA N6-adenosine threonylcarbamoyltransferase.